A 186-amino-acid polypeptide reads, in one-letter code: Adenine phosphoribosyltransferase (186 aa).

The protein belongs to the purine/pyrimidine phosphoribosyltransferase family. In terms of assembly, homodimer.

The protein resides in the cytoplasm. It carries out the reaction AMP + diphosphate = 5-phospho-alpha-D-ribose 1-diphosphate + adenine. It functions in the pathway purine metabolism; AMP biosynthesis via salvage pathway; AMP from adenine: step 1/1. In terms of biological role, catalyzes a salvage reaction resulting in the formation of AMP, that is energically less costly than de novo synthesis. In Xanthomonas campestris pv. campestris (strain 8004), this protein is Adenine phosphoribosyltransferase.